Reading from the N-terminus, the 589-residue chain is Complement component C8 beta chain (589 aa).

An N-terminal signal peptide occupies residues 1 to 31 (MKIGAQVWRALAKSCLLCATLGCLHFPGSRG). The propeptide occupies 32-53 (GKPDFFETKAVNGSLVKSRPVR). N43 carries N-linked (GlcNAc...) asparagine glycosylation. Residues 63-116 (DCELSTWSSWTACDPCQKKRYRHTYLLRPSQFYGELCDLSDKEVEDCVTNQPCR) form the TSP type-1 1 domain. Intrachain disulfides connect C64–C99, C75–C109, C78–C115, C121–C132, C126–C145, C139–C154, and C161–C199. C-linked (Man) tryptophan glycans are attached at residues W69 and W72. Positions 120–155 (RCEGFVCAQTGRCVNRRLLCNGDNDCGDQSDEANCR) constitute an LDL-receptor class A domain. Residues L137, N140, D142, D144, D150, and E151 each coordinate Ca(2+). Residues 157–503 (IYKNCQREME…EFQSEVSSCR (347 aa)) form the MACPF domain. The next 8 beta stranded transmembrane spans lie at 201-206 (PHYILD), 209-213 (FRKPY), 251-258 (FNFTSGFK), 261-268 (GVMDLGIK), 328-335 (SYGEYRDL), 338-343 (DFGTHF), 378-385 (AGGSFGIG), and 391-398 (VYVKVGVS). Cysteines 377 and 402 form a disulfide. Positions 404–534 (DIMKEINERN…PGGFQGTACE (131 aa)) constitute an EGF-like domain. Phosphothreonine is present on T417. 4 disulfide bridges follow: C502–C549, C504–C520, C507–C522, and C524–C533. Residues 544–587 (DGKWSCWSDWSACSGGHKTRHRQCNNPAPHKGGSPCSGPASETL) form the TSP type-1 2 domain. C-linked (Man) tryptophan glycans are attached at residues W550 and W553. C556 and C589 are disulfide-bonded. The disordered stretch occupies residues 570-589 (PAPHKGGSPCSGPASETLNC).

Belongs to the complement C6/C7/C8/C9 family. In terms of assembly, heterotrimer of 3 chains: alpha (C8A), beta (C8B) and gamma (C8G); the alpha and gamma chains are disulfide bonded. Component of the membrane attack complex (MAC), composed of complement C5b, C6, C7, C8A, C8B, C8G and multiple copies of the pore-forming subunit C9. In terms of processing, N-glycosylated; contains one or two bound glycans. Not O-glycosylated.

The protein localises to the secreted. It is found in the target cell membrane. Membrane attack complex (MAC) assembly is inhibited by CD59, thereby protecting self-cells from damage during complement activation. CD59 acts by binding to the beta-haipins of C8 (C8A and C8B), forming an intermolecular beta-sheet that prevents incorporation of the multiple copies of C9 required for complete formation of the osmolytic pore. MAC assembly is also inhibited by clusterin (CLU) chaperones that inhibit polymerization of C9. In terms of biological role, component of the membrane attack complex (MAC), a multiprotein complex activated by the complement cascade, which inserts into a target cell membrane and forms a pore, leading to target cell membrane rupture and cell lysis. The MAC is initiated by proteolytic cleavage of C5 into complement C5b in response to the classical, alternative, lectin and GZMK complement pathways. The complement pathways consist in a cascade of proteins that leads to phagocytosis and breakdown of pathogens and signaling that strengthens the adaptive immune system. C8B, together with C8A and C8G, inserts into the target membrane, but does not form pores by itself. During MAC assembly, associates with C5b, C6 and C7 to form the C5b8 intermediate complex that inserts into the target membrane and traverses the bilayer increasing membrane rigidity. The sequence is that of Complement component C8 beta chain (C8b) from Mus musculus (Mouse).